A 213-amino-acid chain; its full sequence is Large ribosomal subunit protein uL1 (213 aa).

This sequence belongs to the universal ribosomal protein uL1 family. As to quaternary structure, part of the 50S ribosomal subunit.

Functionally, binds directly to 23S rRNA. Probably involved in E site tRNA release. In terms of biological role, protein L1 is also a translational repressor protein, it controls the translation of its operon by binding to its mRNA. This chain is Large ribosomal subunit protein uL1, found in Methanocella arvoryzae (strain DSM 22066 / NBRC 105507 / MRE50).